We begin with the raw amino-acid sequence, 172 residues long: Ribosome maturation factor RimM (172 aa).

Positions 95-168 constitute a PRC barrel domain; that stretch reads DEGEFYYHQI…RVDVAIMEGL (74 aa).

The protein belongs to the RimM family. In terms of assembly, binds ribosomal protein uS19.

The protein localises to the cytoplasm. Its function is as follows. An accessory protein needed during the final step in the assembly of 30S ribosomal subunit, possibly for assembly of the head region. Essential for efficient processing of 16S rRNA. May be needed both before and after RbfA during the maturation of 16S rRNA. It has affinity for free ribosomal 30S subunits but not for 70S ribosomes. This Streptococcus uberis (strain ATCC BAA-854 / 0140J) protein is Ribosome maturation factor RimM.